Reading from the N-terminus, the 114-residue chain is UPF0145 protein PF1756 (114 aa).

Belongs to the UPF0145 family.

The protein is UPF0145 protein PF1756 of Pyrococcus furiosus (strain ATCC 43587 / DSM 3638 / JCM 8422 / Vc1).